The sequence spans 814 residues: Tax1-binding protein 1 homolog (814 aa).

Phosphoserine occurs at positions 124, 138, and 225. A coiled-coil region spans residues 144 to 623 (TTKAGLLELK…KELTKSLEDQ (480 aa)). Residues 320 to 420 (EEISKLQSCL…ELQLHAVKKD (101 aa)) form an oligomerization region. Ser619 bears the Phosphoserine; by IKKA mark. At Ser632 the chain carries Phosphoserine. Residue Ser693 is modified to Phosphoserine; by IKKA. The segment at 701-733 (SQPARNLSRPDGLEDPEDSREDENVPIPPDPAN) is disordered. 2 UBZ1-type zinc fingers span residues 752 to 778 (HKKC…VESH) and 779 to 805 (WKVC…VQTH). Cys755, Cys758, His774, His778, Cys782, Cys785, His801, and His805 together coordinate Zn(2+).

As to quaternary structure, homooligomer. Interacts with TNFAIP3. Interacts with STARD13. Interacts with MYO6. Interacts with TOM1; the interaction is indirect and is mediated by MYO6, which acts as a bridge between TOM1 and TAX1BP1. Interacts with MAVS; this interaction induces MAVS polyubiquitination. Interacts with TNIP1. Interacts with TRAF6; this interaction mediates deubiquitination of TRAF6 and inhibition of NF-kappa-B activation. Interacts with RIPK1; this interaction negatively regulates RIPK1 ubiquitination. Interacts with NBR1. Interacts with TBK1. Interacts with RB1CC1. Interacts with SQSTM1. Interacts with AZI2. Interacts with TICAM1 and TRIM32; these interactions target TICAM1 to TAX1BP1-mediated selective autophagic degradation. In terms of processing, phosphorylated in the C-terminal region by CHUK/IKKA leading to NF-kappa-B signaling down-regulation.

Its subcellular location is the cytoplasm. It is found in the mitochondrion. The protein localises to the preautophagosomal structure. The protein resides in the cytoplasmic vesicle. It localises to the autophagosome. Its function is as follows. Ubiquitin-binding adapter that participates in inflammatory, antiviral and innate immune processes as well as selective autophagy regulation. Plays a key role in the negative regulation of NF-kappa-B and IRF3 signalings by acting as an adapter for the ubiquitin-editing enzyme A20/TNFAIP3 to bind and inactivate its substrates. Disrupts the interactions between the E3 ubiquitin ligase TRAF3 and TBK1/IKBKE to attenuate 'Lys63'-linked polyubiquitination of TBK1 and thereby IFN-beta production. Also recruits A20/TNFAIP3 to ubiquitinated signaling proteins TRAF6 and RIPK1, leading to their deubiquitination and disruption of IL-1 and TNF-induced NF-kappa-B signaling pathways. Inhibits virus-induced apoptosis by inducing the 'Lys-48'-linked polyubiquitination and degradation of MAVS via recruitment of the E3 ligase ITCH, thereby attenuating MAVS-mediated apoptosis signaling. As a macroautophagy/autophagy receptor, facilitates the xenophagic clearance of pathogenic bacteria such as Salmonella typhimurium and Mycobacterium tuberculosis. Upon NBR1 recruitment to the SQSTM1-ubiquitin condensates, acts as the major recruiter of RB1CC1 to these ubiquitin condensates to promote their autophagic degradation. Mediates the autophagic degradation of other substrates including TICAM1. The sequence is that of Tax1-binding protein 1 homolog (Tax1bp1) from Mus musculus (Mouse).